We begin with the raw amino-acid sequence, 107 residues long: Monogrin 2 (107 aa).

Residues 1 to 20 (MEGKVLLCFALLLPFTVAQA) form the signal peptide. Disulfide bonds link cysteine 28–cysteine 82, cysteine 36–cysteine 62, and cysteine 55–cysteine 78. Residues 29 to 82 (GYLMMQRCRGDTTETKAWGFNYEEKKCQKETVICGTGGAPRNAFETKKDCDALC) form the BPTI/Kunitz inhibitor domain. The Cell attachment site signature appears at 37-39 (RGD).

The N-terminus is blocked. Expressed in salivary glands.

Its subcellular location is the cytoplasmic vesicle. The protein resides in the secretory vesicle. It is found in the secreted. Tick salivary platelet aggregation inhibitor that plays an important part in the anti-hemostatic strategy of ticks. Inhibits platelet aggregation induced by ADP (IC(50)~150 nM), collagen, and platelet activating factor (PAF). Acts by binding to platelet membrane glycoprotein IIb-IIIa (ITGA2B/ITGB3) in a metal ion dependent manner. Does not inhibit aggregation induced by ristocecin, an agonist that aggregates platelets independently from the glycoprotein IIb-IIIa (ITGA2B/ITGB3). In contrast to other tick platelet aggregation inhibitors, this protein does not protect ITGA2B/ITGB3 from dissociation under SDS condition, suggesting it may dissocate much faster than its orthologs. This Argas monolakensis (Mono lake bird tick) protein is Monogrin 2.